A 383-amino-acid chain; its full sequence is L-lactate dehydrogenase (383 aa).

An FMN hydroxy acid dehydrogenase domain is found at Met-1 to Lys-380. Tyr-24 contacts substrate. FMN-binding residues include Ser-106 and Gln-127. Tyr-129 is a binding site for substrate. Thr-155 is an FMN binding site. Arg-164 is a substrate binding site. Lys-251 lines the FMN pocket. The active-site Proton acceptor is His-275. A substrate-binding site is contributed by Arg-278. Position 306–330 (Asp-306–Arg-330) interacts with FMN.

This sequence belongs to the FMN-dependent alpha-hydroxy acid dehydrogenase family. Requires FMN as cofactor.

It localises to the cell inner membrane. The catalysed reaction is (S)-lactate + A = pyruvate + AH2. Functionally, catalyzes the conversion of L-lactate to pyruvate. Is coupled to the respiratory chain. This Acinetobacter baumannii (strain AB307-0294) protein is L-lactate dehydrogenase.